Consider the following 224-residue polypeptide: Flagellar L-ring protein (224 aa).

Positions 1–15 (MARYLLLASTLLLAA) are cleaved as a signal peptide. Cys16 carries the N-palmitoyl cysteine lipid modification. Cys16 carries the S-diacylglycerol cysteine lipid modification.

Belongs to the FlgH family. The basal body constitutes a major portion of the flagellar organelle and consists of four rings (L,P,S, and M) mounted on a central rod.

It localises to the cell outer membrane. The protein resides in the bacterial flagellum basal body. Functionally, assembles around the rod to form the L-ring and probably protects the motor/basal body from shearing forces during rotation. This Shewanella sp. (strain ANA-3) protein is Flagellar L-ring protein.